The following is a 1225-amino-acid chain: Cohesin subunit SA-3 (1225 aa).

Residues 1–97 (MSSPLQRAVG…HSRKQSEPPA (97 aa)) are disordered. Low complexity predominate over residues 15-26 (ALSASSSSSASL). Residues 45–54 (LADEDTDFED) are compositionally biased toward acidic residues. Basic residues-rich tracts occupy residues 59 to 69 (NVKKRAAKRPP) and 76 to 90 (KHPKKGSRVVHRHSR). In terms of domain architecture, SCD spans 309 to 394 (FVHRYRDVLP…SRFKDRMVSM (86 aa)). Disordered regions lie at residues 546–567 (SEGHPPVGRVTGRKGLTSKERK), 1063–1113 (AETS…STAV), and 1177–1225 (EEDE…IEDF). A compositionally biased stretch (basic and acidic residues) spans 1078 to 1089 (VEGPAKPNREDV). Residues 1090 to 1099 (SSSQEESLQL) show a composition bias toward low complexity. Over residues 1177–1191 (EEDEEEELEIQDESN) the composition is skewed to acidic residues. A compositionally biased stretch (polar residues) spans 1198-1209 (DMQASSYSSTSE). S1203 is subject to Phosphoserine. The segment covering 1216-1225 (DSTELDIEDF) has biased composition (acidic residues).

It belongs to the SCC3 family. In terms of assembly, component of the meiosis-specific cohesin complex, which also contains the SMC1 (SMC1A or SMC1B) and SMC3 heterodimer. Such complex likely contains RAD21, or the meiosis-specific related protein REC8. Interacts with CCDC79/TERB1; recruiting cohesin to telomeres to develop structural rigidity. Post-translationally, phosphorylated. Testis specific.

Its subcellular location is the nucleus. It is found in the chromosome. The protein resides in the centromere. Functionally, meiosis specific component of cohesin complex. The cohesin complex is required for the cohesion of sister chromatids after DNA replication. The cohesin complex apparently forms a large proteinaceous ring within which sister chromatids can be trapped. At anaphase, the complex is cleaved and dissociates from chromatin, allowing sister chromatids to segregate. The meiosis-specific cohesin complex probably replaces mitosis specific cohesin complex when it dissociates from chromatin during prophase I. This chain is Cohesin subunit SA-3 (STAG3), found in Homo sapiens (Human).